The primary structure comprises 65 residues: UPF0434 protein RPD_0454 (65 aa).

Belongs to the UPF0434 family.

The sequence is that of UPF0434 protein RPD_0454 from Rhodopseudomonas palustris (strain BisB5).